Reading from the N-terminus, the 562-residue chain is Formate--tetrahydrofolate ligase (562 aa).

77 to 84 (TPAGEGKS) provides a ligand contact to ATP.

The protein belongs to the formate--tetrahydrofolate ligase family.

The catalysed reaction is (6S)-5,6,7,8-tetrahydrofolate + formate + ATP = (6R)-10-formyltetrahydrofolate + ADP + phosphate. Its pathway is one-carbon metabolism; tetrahydrofolate interconversion. This chain is Formate--tetrahydrofolate ligase, found in Corynebacterium jeikeium (strain K411).